Here is a 109-residue protein sequence, read N- to C-terminus: MFGKGGMGNLMKQAQMMQERMAKMQEEIARMEMVGESGAGLVKVTMTGAHTVRKVEIYPSLMEDDKEMLEDLIAAACNDAARIIEENQKAKMAEVTGGMQLPPGMKMPF.

Belongs to the YbaB/EbfC family. As to quaternary structure, homodimer.

The protein localises to the cytoplasm. It is found in the nucleoid. Functionally, binds to DNA and alters its conformation. May be involved in regulation of gene expression, nucleoid organization and DNA protection. This Shewanella oneidensis (strain ATCC 700550 / JCM 31522 / CIP 106686 / LMG 19005 / NCIMB 14063 / MR-1) protein is Nucleoid-associated protein SO_2014.